The sequence spans 195 residues: Protein GrpE (195 aa).

Residues 1 to 14 (MQEPHDQEPIEKQK) are compositionally biased toward basic and acidic residues. The tract at residues 1–45 (MQEPHDQEPIEKQKLPGMDDVLETEHSGTVAGNTERAGEDAAPSL) is disordered.

This sequence belongs to the GrpE family. As to quaternary structure, homodimer.

The protein resides in the cytoplasm. Participates actively in the response to hyperosmotic and heat shock by preventing the aggregation of stress-denatured proteins, in association with DnaK and GrpE. It is the nucleotide exchange factor for DnaK and may function as a thermosensor. Unfolded proteins bind initially to DnaJ; upon interaction with the DnaJ-bound protein, DnaK hydrolyzes its bound ATP, resulting in the formation of a stable complex. GrpE releases ADP from DnaK; ATP binding to DnaK triggers the release of the substrate protein, thus completing the reaction cycle. Several rounds of ATP-dependent interactions between DnaJ, DnaK and GrpE are required for fully efficient folding. The chain is Protein GrpE from Nitrosomonas europaea (strain ATCC 19718 / CIP 103999 / KCTC 2705 / NBRC 14298).